The chain runs to 501 residues: WD repeat-containing protein wdr-5.3 (501 aa).

3 disordered regions span residues 1–35 (MNPERQETISPKNVPFQPVPTPNQQSLQSRMLESN), 58–85 (PIGVPQTARPPSNQSPHPNPPGYPYQSH), and 155–197 (KSAE…ITKK). Residues 22-35 (PNQQSLQSRMLESN) show a composition bias toward polar residues. Over residues 167–177 (SITTKPTSTIQ) the composition is skewed to polar residues. 7 WD repeats span residues 211–241 (GHTKSVSVIKFSYCGKYLGTGSADKQIKVWN), 253–283 (SHQLGINDFSWSSNSQFIASASDDTTVKIFD), 295–325 (GHTNYVFCCSFNPQSSLIASAGFDETVRVWD), 337–367 (AHSDPITSISYNHDGNTMATSSYDGCIRVWD), 381–410 (DHAPVTFVCFSPNGKYLLSAQLDSSLKLWD), 422–455 (GHKNKKYCLFANMSVPLGKHIISGSEDGRILVWS), and 467–499 (GHTTPVLATDSHPTLNIIASGGLEPDNVIRIWR).

Belongs to the WD repeat WDR5/wds family.

Its function is as follows. Not required for methylation of histone H3 'Lys-4'. This is WD repeat-containing protein wdr-5.3 (wdr-5.3) from Caenorhabditis elegans.